We begin with the raw amino-acid sequence, 617 residues long: MSWGTELWDQFDNLEKHTQWGIDILEKYIKFVKERTEIELSYAKQLRNLSKKYQPKKNSKEEEEYKYTSCKAFISNLNEMNDYAGQHEVISENMASQIIVDLARYVQELKQERKSNFHDGRKAQQHIETCWKQLESSKRRFERDCKEADRAQQYFEKMDADINVTKADVEKARQQAQIRHQMAEDSKADYSSILQKFNHEQHEYYHTHIPNIFQKIQEMEERRIVRMGESMKTYAEVDRQVIPIIGKCLDGIVKAAESIDQKNDSQLVIEAYKSGFEPPGDIEFEDYTQPMKRTVSDNSLSNSRGEGKPDLKFGGKSKGKLWPFIKKNKLMSLLTSPHQPPPPPPASASPSAVPNGPQSPKQQKEPLSHRFNEFMTSKPKIHCFRSLKRGLSLKLGATPEDFSNLPPEQRRKKLQQKVDELNKEIQKEMDQRDAITKMKDVYLKNPQMGDPASLDHKLAEVSQNIEKLRVETQKFEAWLAEVEGRLPARSEQARRQSGLYDSQNPPTVNNCAQDRESPDGSYTEEQSQESEMKVLATDFDDEFDDEEPLPAIGTCKALYTFEGQNEGTISVVEGETLYVIEEDKGDGWTRIRRNEDEEGYVPTSYVEVCLDKNAKDS.

The segment at 1 to 79 is required for self-association and induction of membrane tubulation; it reads MSWGTELWDQ…CKAFISNLNE (79 aa). The F-BAR domain occupies 1 to 264; that stretch reads MSWGTELWDQ…AAESIDQKND (264 aa). Positions 1–335 are interaction with microtubules; it reads MSWGTELWDQ…KKNKLMSLLT (335 aa). 2 positions are modified to N6-acetyllysine: lysine 66 and lysine 110. Positions 67–259 form a coiled coil; it reads YTSCKAFISN…DGIVKAAESI (193 aa). The tract at residues 251–617 is required for self-association and induction of membrane tubulation; sequence GIVKAAESID…VCLDKNAKDS (367 aa). Disordered stretches follow at residues 280-315 and 333-366; these read GDIE…KFGG and LLTS…QKEP. Residues serine 296 and serine 299 each carry the phosphoserine modification. Over residues 338–347 the composition is skewed to pro residues; the sequence is HQPPPPPPAS. Phosphoserine occurs at positions 349 and 359. Residues 398–490 are a coiled coil; sequence TPEDFSNLPP…EVEGRLPARS (93 aa). The tract at residues 400–552 is interaction with RND2; that stretch reads EDFSNLPPEQ…FDDEEPLPAI (153 aa). One can recognise an REM-1 domain in the interval 404-481; it reads NLPPEQRRKK…TQKFEAWLAE (78 aa). The segment at 486 to 531 is disordered; that stretch reads LPARSEQARRQSGLYDSQNPPTVNNCAQDRESPDGSYTEEQSQESE. The interval 495 to 617 is interaction with PDE6G; that stretch reads RQSGLYDSQN…VCLDKNAKDS (123 aa). Serine 497 carries the post-translational modification Phosphoserine. Residues 499-512 are compositionally biased toward polar residues; sequence LYDSQNPPTVNNCA. Tyrosine 500 is subject to Phosphotyrosine. The interval 514–617 is required for interaction with TNKS; it reads DRESPDGSYT…VCLDKNAKDS (104 aa). Position 521 is a phosphoserine (serine 521). Residues 535–617 are interaction with DNM1 and DNM3; it reads LATDFDDEFD…VCLDKNAKDS (83 aa). An SH3 domain is found at 550–611; that stretch reads PAIGTCKALY…PTSYVEVCLD (62 aa). Residues 550-617 are interaction with ARHGAP17, DAAM1, DIAPH1 and DIAPH2; the sequence is PAIGTCKALY…VCLDKNAKDS (68 aa). Residues 553–609 are interaction with DNM2 and WASL; the sequence is GTCKALYTFEGQNEGTISVVEGETLYVIEEDKGDGWTRIRRNEDEEGYVPTSYVEVC. Residues 553–610 are interaction with FASLG; it reads GTCKALYTFEGQNEGTISVVEGETLYVIEEDKGDGWTRIRRNEDEEGYVPTSYVEVCL.

This sequence belongs to the FNBP1 family. Interacts specifically with GTP-bound RND2 and CDC42. Interacts with PDE6G and microtubules. Homodimerizes, the dimers can polymerize end-to-end to form filamentous structures. Interacts with AKAP9, ARHGAP17, DAAM1, DIAPH1, DIAPH2, DNM1, DNM2, DNM3, FASLG/FASL, SNX2 and WASL/N-WASP. May interact with TNKS. Very highly expressed in the epithelial cells of the gastrointestinal tract, respiratory, reproductive and urinary systems. Also highly expressed in brown adipose tissue, cardiomyocytes, enteric ganglia and glucagon producing cells of the pancreas. Expressed in germ cells of the testis and all regions of the brain.

Its subcellular location is the cytoplasm. The protein localises to the cytoskeleton. It is found in the cell cortex. It localises to the lysosome. The protein resides in the cytoplasmic vesicle. Its subcellular location is the cell membrane. The protein localises to the membrane. It is found in the clathrin-coated pit. In terms of biological role, may act as a link between RND2 signaling and regulation of the actin cytoskeleton. Required to coordinate membrane tubulation with reorganization of the actin cytoskeleton during the late stage of clathrin-mediated endocytosis. Binds to lipids such as phosphatidylinositol 4,5-bisphosphate and phosphatidylserine and promotes membrane invagination and the formation of tubules. Also enhances actin polymerization via the recruitment of WASL/N-WASP, which in turn activates the Arp2/3 complex. Actin polymerization may promote the fission of membrane tubules to form endocytic vesicles. May be required for the lysosomal retention of FASLG/FASL. The polypeptide is Formin-binding protein 1 (FNBP1) (Homo sapiens (Human)).